The primary structure comprises 136 residues: Large ribosomal subunit protein uL16 (136 aa).

Belongs to the universal ribosomal protein uL16 family. Part of the 50S ribosomal subunit.

In terms of biological role, binds 23S rRNA and is also seen to make contacts with the A and possibly P site tRNAs. This is Large ribosomal subunit protein uL16 from Shewanella baltica (strain OS155 / ATCC BAA-1091).